Consider the following 1374-residue polypeptide: DNA-directed RNA polymerase subunit beta (1374 aa).

The protein belongs to the RNA polymerase beta chain family. As to quaternary structure, the RNAP catalytic core consists of 2 alpha, 1 beta, 1 beta' and 1 omega subunit. When a sigma factor is associated with the core the holoenzyme is formed, which can initiate transcription.

The enzyme catalyses RNA(n) + a ribonucleoside 5'-triphosphate = RNA(n+1) + diphosphate. DNA-dependent RNA polymerase catalyzes the transcription of DNA into RNA using the four ribonucleoside triphosphates as substrates. The chain is DNA-directed RNA polymerase subunit beta from Acidovorax sp. (strain JS42).